The chain runs to 182 residues: Large ribosomal subunit protein uL5m (182 aa).

This sequence belongs to the universal ribosomal protein uL5 family.

It is found in the mitochondrion. In Reclinomonas americana, this protein is Large ribosomal subunit protein uL5m (RPL5).